The chain runs to 432 residues: Adenylosuccinate synthetase (432 aa).

GTP-binding positions include 13–19 and 41–43; these read GDEGKGK and GHT. The active-site Proton acceptor is Asp-14. Mg(2+)-binding residues include Asp-14 and Gly-41. Residues 14–17, 39–42, Thr-130, Arg-144, Gln-225, Thr-240, and Arg-304 contribute to the IMP site; these read DEGK and NAGH. Residue His-42 is the Proton donor of the active site. A substrate-binding site is contributed by 300–306; that stretch reads AVTGRPR. GTP is bound by residues Arg-306, 332 to 334, and 415 to 417; these read KLD and STG.

Belongs to the adenylosuccinate synthetase family. As to quaternary structure, homodimer. Mg(2+) serves as cofactor.

It localises to the cytoplasm. It carries out the reaction IMP + L-aspartate + GTP = N(6)-(1,2-dicarboxyethyl)-AMP + GDP + phosphate + 2 H(+). The protein operates within purine metabolism; AMP biosynthesis via de novo pathway; AMP from IMP: step 1/2. Plays an important role in the de novo pathway of purine nucleotide biosynthesis. Catalyzes the first committed step in the biosynthesis of AMP from IMP. This Mannheimia succiniciproducens (strain KCTC 0769BP / MBEL55E) protein is Adenylosuccinate synthetase.